The following is a 509-amino-acid chain: MEIRAAEISKVIREQIEGFGADAEVSEVGRVISVGDGIARVYGLDKVEAGEMVTFSSGVQGMALNLEADNVGVVIFGSDLEVGEGDTVRRTGQIVDVPVGPELLGRVVDALGNPIDGKGPINAKLRRRSEEMAPGIIPRKSVHEAVQTGIKALDALVPVGRGQRELIIGDRQTGKTAIAIDAFINQKQVNSGSDNTKKLFCIYVAIGQKRSTVAQIVRQLEEMGAMEYSIVVAATASEPAPLQYLVPYSACSMGEYFRDNKQHALIVYDDLSKQAVAYRQMSLLLRRPPGREAYPGDVFYLHSRLLERAAKMSDKMGAGSLTALPIIETQAGDVSAYIPTNVISITDGQIFLETDLFYQGIRPAINVGLSVSRVGSAAQTKAMKKVAGSIKLELAQYREMAAFAQFGSDLDASTQKLLNRGKRLTELLKQPQFHPMPFEEQVVSLFAGTNGYIDGIEVSDVNRYEEAMLSYMRSSHNDLLATIRETGDFSDETKSKLTAALDNFAKIFA.

169 to 176 (GDRQTGKT) provides a ligand contact to ATP.

Belongs to the ATPase alpha/beta chains family. As to quaternary structure, F-type ATPases have 2 components, CF(1) - the catalytic core - and CF(0) - the membrane proton channel. CF(1) has five subunits: alpha(3), beta(3), gamma(1), delta(1), epsilon(1). CF(0) has three main subunits: a(1), b(2) and c(9-12). The alpha and beta chains form an alternating ring which encloses part of the gamma chain. CF(1) is attached to CF(0) by a central stalk formed by the gamma and epsilon chains, while a peripheral stalk is formed by the delta and b chains.

It localises to the cell inner membrane. It catalyses the reaction ATP + H2O + 4 H(+)(in) = ADP + phosphate + 5 H(+)(out). Functionally, produces ATP from ADP in the presence of a proton gradient across the membrane. The alpha chain is a regulatory subunit. This chain is ATP synthase subunit alpha, found in Zymomonas mobilis subsp. mobilis (strain ATCC 31821 / ZM4 / CP4).